Here is a 576-residue protein sequence, read N- to C-terminus: Zn(2)-C6 fungal-type transcription factor mpsE (576 aa).

The segment at residues 15 to 46 is a DNA-binding region (zn(2)-C6 fungal-type); sequence CDRCRSHKLKCPQQPSTATGACQRCTRAKAQC. The span at 47-61 shows a compositional bias: polar residues; sequence TFSPRSRAIKNTQDG. 3 disordered regions span residues 47-123, 334-369, and 404-424; these read TFSP…GTFD, VAHAGHPPPPHLSHHRHCQPSPPGSLPTPTSRSSTA, and HPAPSHSSARHRHSRSTLHRR. The segment covering 95 to 109 has biased composition (low complexity); sequence PPQQQQSDQQKPSGS.

The protein resides in the nucleus. Its function is as follows. Transcription factor; part of the gene cluster that mediates the biosynthesis of macrophasetins, 3-decalinoyltetramic acids (DTAs) which feature a tetramate (pyrrolidine-2,4-dione) unit connected to a decalin fragment and that have potent bioactivities. The sequence is that of Zn(2)-C6 fungal-type transcription factor mpsE from Macrophomina phaseolina (strain MS6) (Charcoal rot fungus).